A 787-amino-acid polypeptide reads, in one-letter code: Protein smoothened (787 aa).

Positions 1–27 (MAAARPARGPELPLLGLLLLLLLGDPG) are cleaved as a signal peptide. Residues 28 to 233 (RGAASSGNAT…EAEHQDMHSY (206 aa)) are Extracellular-facing. The tract at residues 30–60 (AASSGNATGPGPRSAGGSARRSAAVTGPPPP) is disordered. N35 carries an N-linked (GlcNAc...) asparagine glycan. The segment covering 38 to 53 (GPGPRSAGGSARRSAA) has biased composition (low complexity). Intrachain disulfides connect C64/C178, C70/C134, C78/C127, C118/C154, and C147/C169. The region spanning 65–181 (GRAAPCEPLR…DRFPEGCTNE (117 aa)) is the FZ domain. Cholesterol is bound at residue D95. N-linked (GlcNAc...) asparagine glycosylation occurs at N188. Disulfide bonds link C193-C213 and C217-C295. A helical transmembrane segment spans residues 234-254 (IAAFGAVTGLCTLFTLATFVA). Residues 255–262 (DWRNSNRY) are Cytoplasmic-facing. Residues 263 to 283 (PAVILFYVNACFFVGSIGWLA) traverse the membrane as a helical segment. Over 284-314 (QFMDGARREIVCRADGTMRLGEPTSNETLSC) the chain is Extracellular. Residue N309 is glycosylated (N-linked (GlcNAc...) asparagine). Residues C314 and C390 are joined by a disulfide bond. The chain crosses the membrane as a helical span at residues 315–335 (VIIFVIVYYALMAGVVWFVVL). The Cytoplasmic portion of the chain corresponds to 336–358 (TYAWHTSFKALGTTYQPLSGKTS). A helical transmembrane segment spans residues 359 to 379 (YFHLLTWSLPFVLTVAILAVA). The Extracellular portion of the chain corresponds to 380–402 (QVDGDSVSGICFVGYKNYRYRAG). Y394 is a binding site for cholesterol. A helical transmembrane segment spans residues 403-423 (FVLAPIGLVLIVGGYFLIRGV). At 424-451 (MTLFSIKSNHPGLLSEKAASKINETMLR) the chain is on the cytoplasmic side. The chain crosses the membrane as a helical span at residues 452–472 (LGIFGFLAFGFVLITFSCHFY). At 473–524 (DFFNQAEWERSFRDYVLCQANVTIGLPTKQPIPDCEIKNRPSLLVEKINLFA) the chain is on the extracellular side. Residues C490 and C507 are joined by a disulfide bond. A helical transmembrane segment spans residues 525-545 (MFGTGIAMSTWVWTKATLLIW). The segment at 538-569 (TKATLLIWRRTWCRLTGQSDDEPKRIKKSKMI) is interaction with BBS5 and BBS7. The Cytoplasmic portion of the chain corresponds to 546 to 787 (RRTWCRLTGQ…TELMDADSDF (242 aa)). Phosphoserine occurs at positions 556, 574, and 590. The interval 570–653 (AKAFSKRHEL…TPVPPEEQAN (84 aa)) is required for interaction with PRKACA. Positions 581 to 593 (QNPGQELSFSMHT) are interaction with DLG5. Residue T593 is modified to Phosphothreonine. Phosphoserine is present on residues S595 and S638. T640 and T644 each carry phosphothreonine. The residue at position 662 (S662) is a Phosphoserine. A disordered region spans residues 667–704 (KRLGRKKKRRKRKKEVCPLAPPPELHPPAPAPSTIPRL). Residues 668–680 (RLGRKKKRRKRKK) show a composition bias toward basic residues. The segment covering 685-699 (LAPPPELHPPAPAPS) has biased composition (pro residues).

The protein belongs to the G-protein coupled receptor Fz/Smo family. In terms of assembly, homodimer. Interacts (via C-terminus) with protein kinase A catalytic subunit PRKACA; interacts with free PRKACA subunits and the interaction leads to sequestration of PRKACA at the membrane, preventing PRKACA-mediated phosphorylation of GLI transcription factors. Interacts with ARRB2. Interacts with KIF7. Interacts with BBS5 and BBS7; the interactions are indicative for the association of SMO with the BBsome complex to facilitate ciliary localization of SMO. Interacts with DLG5 and SDCBP. Interacts with GAS8/DRC4. Phosphorylation by GRK kinases is required for interaction with protein kinase A catalytic subunit PRKACA.

The protein localises to the cell membrane. The protein resides in the cell projection. It localises to the cilium. Functionally, g protein-coupled receptor which associates with the patched protein (PTCH) to transduce hedgehog protein signaling. Binding of sonic hedgehog (SHH) to its receptor patched prevents inhibition of smoothened (SMO) by patched. When active, SMO binds to and sequesters protein kinase A catalytic subunit PRKACA at the cell membrane, preventing PRKACA-mediated phosphorylation of GLI transcription factors which releases the GLI proteins from PRKACA-mediated inhibition and allows for transcriptional activation of hedgehog pathway target genes. Required for the accumulation of KIF7, GLI2 and GLI3 in the cilia. Interacts with DLG5 at the ciliary base to induce the accumulation of KIF7 and GLI2 at the ciliary tip for GLI2 activation. The protein is Protein smoothened (SMO) of Homo sapiens (Human).